We begin with the raw amino-acid sequence, 523 residues long: Type 2 DNA topoisomerase 6 subunit B (523 aa).

ATP contacts are provided by residues Asn48, Asp80, 101 to 102 (SK), 110 to 117 (GQQGLGCS), and Lys436.

The protein belongs to the TOP6B family. Homodimer. Heterotetramer of two Top6A and two Top6B chains.

The enzyme catalyses ATP-dependent breakage, passage and rejoining of double-stranded DNA.. Its function is as follows. Relaxes both positive and negative superturns and exhibits a strong decatenase activity. The polypeptide is Type 2 DNA topoisomerase 6 subunit B (Methanothermobacter thermautotrophicus (strain ATCC 29096 / DSM 1053 / JCM 10044 / NBRC 100330 / Delta H) (Methanobacterium thermoautotrophicum)).